Reading from the N-terminus, the 295-residue chain is Probable nicotinate-nucleotide pyrophosphorylase [carboxylating] (295 aa).

Substrate contacts are provided by residues arginine 111, 144–146 (TRK), arginine 168, lysine 178, glutamate 208, aspartate 229, and 255–257 (SGN).

It belongs to the NadC/ModD family. As to quaternary structure, hexamer formed by 3 homodimers.

It catalyses the reaction nicotinate beta-D-ribonucleotide + CO2 + diphosphate = quinolinate + 5-phospho-alpha-D-ribose 1-diphosphate + 2 H(+). It functions in the pathway cofactor biosynthesis; NAD(+) biosynthesis; nicotinate D-ribonucleotide from quinolinate: step 1/1. Involved in the catabolism of quinolinic acid (QA). This Synechocystis sp. (strain ATCC 27184 / PCC 6803 / Kazusa) protein is Probable nicotinate-nucleotide pyrophosphorylase [carboxylating] (nadC).